The sequence spans 242 residues: Type III pantothenate kinase (242 aa).

7–14 (DLGNSRFK) contributes to the ATP binding site. Residues tyrosine 91 and 98–101 (GVDR) contribute to the substrate site. Aspartate 100 serves as the catalytic Proton acceptor. Threonine 121 contributes to the ATP binding site. Residue threonine 171 coordinates substrate.

The protein belongs to the type III pantothenate kinase family. In terms of assembly, homodimer. NH4(+) serves as cofactor. The cofactor is K(+).

Its subcellular location is the cytoplasm. The catalysed reaction is (R)-pantothenate + ATP = (R)-4'-phosphopantothenate + ADP + H(+). It participates in cofactor biosynthesis; coenzyme A biosynthesis; CoA from (R)-pantothenate: step 1/5. Functionally, catalyzes the phosphorylation of pantothenate (Pan), the first step in CoA biosynthesis. The chain is Type III pantothenate kinase from Xylella fastidiosa (strain 9a5c).